A 241-amino-acid chain; its full sequence is Protein McbE (241 aa).

The next 6 helical transmembrane spans lie at 17 to 35 (TPFS…FFFL), 54 to 72 (ISWF…NYCL), 105 to 123 (LIMS…LTGF), 131 to 149 (IVMI…MVSL), 163 to 181 (STIY…IVSL), and 212 to 230 (LMTI…ISAL).

It localises to the cell membrane. Its function is as follows. Together with two further proteins McbF and McbG this protein causes immunity to the peptide antibiotic microcin B17 (MccB17), which inhibits DNA replication in enterobacteriaceae. Immunity is determined by two different mechanisms. McbE is involved in the production of extracellular MccB17 and, in a complex with McbF it also serves as 'pump' for the export of active MccB17 from the cytoplasm to the periplasmic space. This is Protein McbE (mcbE) from Escherichia coli.